Here is a 156-residue protein sequence, read N- to C-terminus: Small ribosomal subunit protein uS7 (156 aa).

This sequence belongs to the universal ribosomal protein uS7 family. In terms of assembly, part of the 30S ribosomal subunit. Contacts proteins S9 and S11.

One of the primary rRNA binding proteins, it binds directly to 16S rRNA where it nucleates assembly of the head domain of the 30S subunit. Is located at the subunit interface close to the decoding center, probably blocks exit of the E-site tRNA. This is Small ribosomal subunit protein uS7 from Prochlorococcus marinus (strain MIT 9303).